The following is a 594-amino-acid chain: Protein TRANSPORT INHIBITOR RESPONSE 1 (594 aa).

One can recognise an F-box domain in the interval 3-50 (KRIALSFPEEVLEHVFSFIQLDKDRNSVSLVCKSWYEIERWCRRKVFI). Lysine 74 contributes to the 1D-myo-inositol hexakisphosphate binding site. The interval 81-82 (DF) is interaction with auxin-responsive proteins. Residues 113-114 (KR) and arginine 344 contribute to the 1D-myo-inositol hexakisphosphate site. The tract at residues 347-352 (PSEPFV) is interaction with auxin-responsive proteins. Residue 401-403 (RFR) coordinates 1D-myo-inositol hexakisphosphate. A (indol-3-yl)acetate-binding site is contributed by arginine 403. The tract at residues 405-409 (CIIEP) is interaction with auxin-responsive proteins. Arginine 436 serves as a coordination point for 1D-myo-inositol hexakisphosphate. 438–439 (SL) is a binding site for (indol-3-yl)acetate. An interaction with auxin-responsive proteins region spans residues 464–465 (AF). 1D-myo-inositol hexakisphosphate contacts are provided by residues 484–485 (RK) and arginine 509.

Interacts with auxin. Part of a SCF E3 ubiquitin ligase complex SCF(TIR1) composed of SKP1, CUL1, RBX1 and TIR1. SCF(TIR1) interacts with the COP9 signalosome (CSN) complex. Interacts with Aux/IAA proteins (IAA3, IAA7, IAA12 and IAA17) in an auxin-dependent manner. The interaction with IAA3, a negative regulator of auxin responses, is promoted by auxin, but repressed by juglon (5-hydroxy-1,4-naphthoquinone). Interactions with auxin-responsive proteins is inactivated by auxin antagonists. As to expression, expressed in roots, stems, leaves and flowers. In adult plants, mostly expressed in floral stigma, anther filaments, abscission zones and vascular tissues.

Its subcellular location is the nucleus. Its pathway is protein modification; protein ubiquitination. Functionally, auxin receptor that mediates Aux/IAA proteins proteasomal degradation and auxin-regulated transcription. The SCF(TIR1) E3 ubiquitin ligase complex is involved in auxin-mediated signaling pathway that regulate root and hypocotyl growth, lateral root formation, cell elongation, and gravitropism. Appears to allow pericycle cells to overcome G2 arrest prior to lateral root development. Plays a role in ethylene signaling in roots. Confers sensitivity to the virulent bacterial pathogen P.syringae. The sequence is that of Protein TRANSPORT INHIBITOR RESPONSE 1 (TIR1) from Arabidopsis thaliana (Mouse-ear cress).